The chain runs to 291 residues: Aspartate carbamoyltransferase catalytic subunit (291 aa).

Carbamoyl phosphate is bound by residues Arg47 and Thr48. An L-aspartate-binding site is contributed by Lys75. Carbamoyl phosphate contacts are provided by Arg97, His126, and Gln129. L-aspartate is bound by residues Arg159 and Arg213. Carbamoyl phosphate-binding residues include Gly251 and Pro252.

It belongs to the aspartate/ornithine carbamoyltransferase superfamily. ATCase family. In terms of assembly, heterododecamer (2C3:3R2) of six catalytic PyrB chains organized as two trimers (C3), and six regulatory PyrI chains organized as three dimers (R2).

The catalysed reaction is carbamoyl phosphate + L-aspartate = N-carbamoyl-L-aspartate + phosphate + H(+). It functions in the pathway pyrimidine metabolism; UMP biosynthesis via de novo pathway; (S)-dihydroorotate from bicarbonate: step 2/3. Catalyzes the condensation of carbamoyl phosphate and aspartate to form carbamoyl aspartate and inorganic phosphate, the committed step in the de novo pyrimidine nucleotide biosynthesis pathway. The protein is Aspartate carbamoyltransferase catalytic subunit of Aquifex aeolicus (strain VF5).